Here is a 274-residue protein sequence, read N- to C-terminus: Rhamnulose-1-phosphate aldolase (274 aa).

Residue Glu-117 is part of the active site. Positions 141, 143, and 212 each coordinate Zn(2+).

This sequence belongs to the aldolase class II family. RhaD subfamily. In terms of assembly, homotetramer. Zn(2+) is required as a cofactor.

The protein resides in the cytoplasm. The catalysed reaction is L-rhamnulose 1-phosphate = (S)-lactaldehyde + dihydroxyacetone phosphate. The protein operates within carbohydrate degradation; L-rhamnose degradation; glycerone phosphate from L-rhamnose: step 3/3. In terms of biological role, catalyzes the reversible cleavage of L-rhamnulose-1-phosphate to dihydroxyacetone phosphate (DHAP) and L-lactaldehyde. This chain is Rhamnulose-1-phosphate aldolase, found in Escherichia coli (strain SE11).